The sequence spans 299 residues: uncharacterized protein (299 aa).

Residues 4-20 form a helical membrane-spanning segment; that stretch reads LFFIFVMLIVLLCGCTS.

It is found in the membrane. This is an uncharacterized protein from Methanocaldococcus jannaschii (strain ATCC 43067 / DSM 2661 / JAL-1 / JCM 10045 / NBRC 100440) (Methanococcus jannaschii).